Consider the following 185-residue polypeptide: MPLLFVLLSYLLGTFPSAYLAGYLSTDRDIRLMGDHNMGAQNAYRCLGRGWGLAVFVFDLAKGSLAITLALAAGLSPGWVMFCGLAAVLGHNWPVWLGFRGGRGEATAIGVMLLIATQPMLIMGGLGLLVLLFTSSVIAASAVMFGLLWLAVILYGLPGGVVAYSIGLPVVVGLTHFIRSRKNRL.

The next 6 membrane-spanning stretches (helical) occupy residues 1–21 (MPLLFVLLSYLLGTFPSAYLA), 47–67 (LGRGWGLAVFVFDLAKGSLAI), 69–89 (LALAAGLSPGWVMFCGLAAVL), 113–133 (LLIATQPMLIMGGLGLLVLLF), 137–157 (VIAASAVMFGLLWLAVILYGL), and 158–178 (PGGVVAYSIGLPVVVGLTHFI).

The protein belongs to the PlsY family. In terms of assembly, probably interacts with PlsX.

The protein resides in the cell membrane. It carries out the reaction an acyl phosphate + sn-glycerol 3-phosphate = a 1-acyl-sn-glycero-3-phosphate + phosphate. It participates in lipid metabolism; phospholipid metabolism. Its function is as follows. Catalyzes the transfer of an acyl group from acyl-phosphate (acyl-PO(4)) to glycerol-3-phosphate (G3P) to form lysophosphatidic acid (LPA). This enzyme utilizes acyl-phosphate as fatty acyl donor, but not acyl-CoA or acyl-ACP. The polypeptide is Glycerol-3-phosphate acyltransferase 4 (Dehalococcoides mccartyi (strain ATCC BAA-2266 / KCTC 15142 / 195) (Dehalococcoides ethenogenes (strain 195))).